A 94-amino-acid chain; its full sequence is Small ribosomal subunit protein uS19 (94 aa).

It belongs to the universal ribosomal protein uS19 family.

In terms of biological role, protein S19 forms a complex with S13 that binds strongly to the 16S ribosomal RNA. The polypeptide is Small ribosomal subunit protein uS19 (rpsS) (Lactobacillus acidophilus (strain ATCC 700396 / NCK56 / N2 / NCFM)).